The following is a 462-amino-acid chain: Adenylosuccinate lyase (462 aa).

N(6)-(1,2-dicarboxyethyl)-AMP-binding positions include 21–22 (RY), 87–89 (KHD), and 114–115 (TS). Histidine 162 (proton donor/acceptor) is an active-site residue. Position 236 (glutamine 236) interacts with N(6)-(1,2-dicarboxyethyl)-AMP. Catalysis depends on serine 287, which acts as the Proton donor/acceptor. N(6)-(1,2-dicarboxyethyl)-AMP contacts are provided by residues serine 288, 293–295 (KRN), and 332–336 (SAERC).

This sequence belongs to the lyase 1 family. Adenylosuccinate lyase subfamily. Homotetramer. Residues from neighboring subunits contribute catalytic and substrate-binding residues to each active site.

The catalysed reaction is N(6)-(1,2-dicarboxyethyl)-AMP = fumarate + AMP. The enzyme catalyses (2S)-2-[5-amino-1-(5-phospho-beta-D-ribosyl)imidazole-4-carboxamido]succinate = 5-amino-1-(5-phospho-beta-D-ribosyl)imidazole-4-carboxamide + fumarate. It participates in purine metabolism; AMP biosynthesis via de novo pathway; AMP from IMP: step 2/2. It functions in the pathway purine metabolism; IMP biosynthesis via de novo pathway; 5-amino-1-(5-phospho-D-ribosyl)imidazole-4-carboxamide from 5-amino-1-(5-phospho-D-ribosyl)imidazole-4-carboxylate: step 2/2. Functionally, catalyzes two reactions in de novo purine nucleotide biosynthesis. Catalyzes the breakdown of 5-aminoimidazole- (N-succinylocarboxamide) ribotide (SAICAR or 2-[5-amino-1-(5-phospho-beta-D-ribosyl)imidazole-4-carboxamido]succinate) to 5-aminoimidazole-4-carboxamide ribotide (AICAR or 5-amino-1-(5-phospho-beta-D-ribosyl)imidazole-4-carboxamide) and fumarate, and of adenylosuccinate (ADS or N(6)-(1,2-dicarboxyethyl)-AMP) to adenosine monophosphate (AMP) and fumarate. The chain is Adenylosuccinate lyase (purB) from Methanocaldococcus jannaschii (strain ATCC 43067 / DSM 2661 / JAL-1 / JCM 10045 / NBRC 100440) (Methanococcus jannaschii).